Reading from the N-terminus, the 77-residue chain is Translation initiation factor IF-1, chloroplastic (77 aa).

Positions 1 to 72 constitute an S1-like domain; sequence MRKQNLIEME…TKGRITYRLR (72 aa).

This sequence belongs to the IF-1 family. As to quaternary structure, component of the 30S ribosomal translation pre-initiation complex which assembles on the 30S ribosome in the order IF-2 and IF-3, IF-1 and N-formylmethionyl-tRNA(fMet); mRNA recruitment can occur at any time during PIC assembly.

It is found in the plastid. The protein resides in the chloroplast. In terms of biological role, one of the essential components for the initiation of protein synthesis. Stabilizes the binding of IF-2 and IF-3 on the 30S subunit to which N-formylmethionyl-tRNA(fMet) subsequently binds. Helps modulate mRNA selection, yielding the 30S pre-initiation complex (PIC). Upon addition of the 50S ribosomal subunit IF-1, IF-2 and IF-3 are released leaving the mature 70S translation initiation complex. This is Translation initiation factor IF-1, chloroplastic from Staurastrum punctulatum (Green alga).